Here is a 327-residue protein sequence, read N- to C-terminus: Transcription factor bHLH71 (327 aa).

Disordered stretches follow at residues Ile46–Met88 and Ala151–Ser176. Basic residues predominate over residues Arg65–Val76. Residues Cys77–Met88 show a composition bias toward basic and acidic residues. In terms of domain architecture, bHLH spans Asn85–Leu136. Residues Lys152–Gln169 are compositionally biased toward polar residues.

Homodimer. Interacts with FAMA. Expressed in leaves, stems, and flowers.

It localises to the nucleus. Transcription factor. May be involved in the differentiation of stomatal guard cells. The chain is Transcription factor bHLH71 (BHLH71) from Arabidopsis thaliana (Mouse-ear cress).